The primary structure comprises 356 residues: HORMA domain-containing protein 1 (356 aa).

Positions 24–225 (QQSLVLVKKL…TPFHSIKMNV (202 aa)) constitute an HORMA domain. Disordered regions lie at residues 282 to 305 (ETQE…PKMD) and 333 to 356 (QLEF…SVPK). A compositionally biased stretch (basic and acidic residues) spans 288-298 (EQPHRHTKEDF). Residues 347 to 356 (PKRRKVSVPK) show a composition bias toward basic residues.

The protein resides in the nucleus. It localises to the chromosome. Plays a key role in meiotic progression by ensuring that sufficient numbers of processed DNA double-strand breaks (DSBs) are available for successful homology search, promoting synaptonemal-complex formation independently and playing key role in the male mid-pachytene checkpoint and the female meiotic prophase checkpoint. The polypeptide is HORMA domain-containing protein 1 (hormad1) (Danio rerio (Zebrafish)).